Here is a 153-residue protein sequence, read N- to C-terminus: D-aminoacyl-tRNA deacylase (153 aa).

The short motif at 137-138 is the Gly-cisPro motif, important for rejection of L-amino acids element; it reads GP.

The protein belongs to the DTD family. In terms of assembly, homodimer.

Its subcellular location is the cytoplasm. It carries out the reaction glycyl-tRNA(Ala) + H2O = tRNA(Ala) + glycine + H(+). The enzyme catalyses a D-aminoacyl-tRNA + H2O = a tRNA + a D-alpha-amino acid + H(+). Its function is as follows. An aminoacyl-tRNA editing enzyme that deacylates mischarged D-aminoacyl-tRNAs. Also deacylates mischarged glycyl-tRNA(Ala), protecting cells against glycine mischarging by AlaRS. Acts via tRNA-based rather than protein-based catalysis; rejects L-amino acids rather than detecting D-amino acids in the active site. By recycling D-aminoacyl-tRNA to D-amino acids and free tRNA molecules, this enzyme counteracts the toxicity associated with the formation of D-aminoacyl-tRNA entities in vivo and helps enforce protein L-homochirality. In Dehalococcoides mccartyi (strain ATCC BAA-2266 / KCTC 15142 / 195) (Dehalococcoides ethenogenes (strain 195)), this protein is D-aminoacyl-tRNA deacylase.